A 145-amino-acid chain; its full sequence is Cell wall synthesis protein CwsA (145 aa).

Residues 104-124 traverse the membrane as a helical segment; the sequence is WIFAGIAAAILAGGAVAFSIV.

This sequence belongs to the CwsA family.

The protein resides in the cell membrane. In terms of biological role, required for regulated cell division, cell wall synthesis and the maintenance of cell shape. The chain is Cell wall synthesis protein CwsA from Mycobacterium bovis (strain ATCC BAA-935 / AF2122/97).